The chain runs to 246 residues: Acetoacetate decarboxylase (246 aa).

Catalysis depends on Lys-116, which acts as the Schiff-base intermediate with acetoacetate.

It belongs to the ADC family.

The enzyme catalyses acetoacetate + H(+) = acetone + CO2. Functionally, catalyzes the conversion of acetoacetate to acetone and carbon dioxide. This Burkholderia mallei (strain NCTC 10247) protein is Acetoacetate decarboxylase.